The sequence spans 269 residues: Formamidopyrimidine-DNA glycosylase (269 aa).

The Schiff-base intermediate with DNA role is filled by proline 2. Glutamate 3 (proton donor) is an active-site residue. Catalysis depends on lysine 57, which acts as the Proton donor; for beta-elimination activity. 3 residues coordinate DNA: histidine 90, arginine 109, and lysine 150. The segment at 235 to 269 (LVYGKAGEPCPECGEPLQELKIGQRNTFFCNECQQ) adopts an FPG-type zinc-finger fold. Arginine 259 acts as the Proton donor; for delta-elimination activity in catalysis.

Belongs to the FPG family. As to quaternary structure, monomer. Requires Zn(2+) as cofactor.

It catalyses the reaction Hydrolysis of DNA containing ring-opened 7-methylguanine residues, releasing 2,6-diamino-4-hydroxy-5-(N-methyl)formamidopyrimidine.. It carries out the reaction 2'-deoxyribonucleotide-(2'-deoxyribose 5'-phosphate)-2'-deoxyribonucleotide-DNA = a 3'-end 2'-deoxyribonucleotide-(2,3-dehydro-2,3-deoxyribose 5'-phosphate)-DNA + a 5'-end 5'-phospho-2'-deoxyribonucleoside-DNA + H(+). Its function is as follows. Involved in base excision repair of DNA damaged by oxidation or by mutagenic agents. Acts as a DNA glycosylase that recognizes and removes damaged bases. Has a preference for oxidized purines, such as 7,8-dihydro-8-oxoguanine (8-oxoG). Has AP (apurinic/apyrimidinic) lyase activity and introduces nicks in the DNA strand. Cleaves the DNA backbone by beta-delta elimination to generate a single-strand break at the site of the removed base with both 3'- and 5'-phosphates. The sequence is that of Formamidopyrimidine-DNA glycosylase from Vibrio parahaemolyticus serotype O3:K6 (strain RIMD 2210633).